Consider the following 94-residue polypeptide: Phosphoribosyl-ATP pyrophosphatase (94 aa).

This sequence belongs to the PRA-PH family.

The protein localises to the cytoplasm. The enzyme catalyses 1-(5-phospho-beta-D-ribosyl)-ATP + H2O = 1-(5-phospho-beta-D-ribosyl)-5'-AMP + diphosphate + H(+). It participates in amino-acid biosynthesis; L-histidine biosynthesis; L-histidine from 5-phospho-alpha-D-ribose 1-diphosphate: step 2/9. The sequence is that of Phosphoribosyl-ATP pyrophosphatase (hisE) from Saccharolobus solfataricus (strain ATCC 35092 / DSM 1617 / JCM 11322 / P2) (Sulfolobus solfataricus).